Reading from the N-terminus, the 615-residue chain is Medium-chain acyl-CoA ligase ACSF2, mitochondrial (615 aa).

The transit peptide at 1–41 (MAVYHGMLRFGRLCIASLGARGPRTLLSRPRPNSKLQSVRA) directs the protein to the mitochondrion. N6-acetyllysine is present on Lys179. Lys182 bears the N6-acetyllysine; alternate mark. Lys182 bears the N6-succinyllysine; alternate mark. Lys199 is subject to N6-acetyllysine. 263–271 (TSGTTGNPK) provides a ligand contact to ATP. N6-acetyllysine occurs at positions 340 and 398. At Lys478 the chain carries N6-succinyllysine. Asp493 and Arg508 together coordinate ATP. The residue at position 510 (Lys510) is an N6-acetyllysine. An N6-acetyllysine; alternate mark is found at Lys544 and Lys570. An N6-succinyllysine; alternate mark is found at Lys544 and Lys570. Position 599 (Lys599) interacts with ATP. An N6-succinyllysine modification is found at Lys599.

Belongs to the ATP-dependent AMP-binding enzyme family.

Its subcellular location is the mitochondrion. The enzyme catalyses a medium-chain fatty acid + ATP + CoA = a medium-chain fatty acyl-CoA + AMP + diphosphate. The catalysed reaction is octanoate + ATP + CoA = octanoyl-CoA + AMP + diphosphate. Acyl-CoA synthases catalyze the initial reaction in fatty acid metabolism, by forming a thioester with CoA. Has some preference toward medium-chain substrates. Plays a role in adipocyte differentiation. The protein is Medium-chain acyl-CoA ligase ACSF2, mitochondrial of Mus musculus (Mouse).